The following is a 152-amino-acid chain: UPF0178 protein Plav_1521 (152 aa).

The disordered stretch occupies residues 114–152; that stretch reads LRETGQSKGGGPAFSKEDRSRFLRSLEDTVQAIRRRPPP. Over residues 128–140 the composition is skewed to basic and acidic residues; sequence SKEDRSRFLRSLE.

The protein belongs to the UPF0178 family.

The sequence is that of UPF0178 protein Plav_1521 from Parvibaculum lavamentivorans (strain DS-1 / DSM 13023 / NCIMB 13966).